We begin with the raw amino-acid sequence, 290 residues long: Malonyl-[acyl-carrier protein] O-methyltransferase (290 aa).

This sequence belongs to the methyltransferase superfamily.

The catalysed reaction is malonyl-[ACP] + S-adenosyl-L-methionine = malonyl-[ACP] methyl ester + S-adenosyl-L-homocysteine. It participates in cofactor biosynthesis; biotin biosynthesis. Functionally, converts the free carboxyl group of a malonyl-thioester to its methyl ester by transfer of a methyl group from S-adenosyl-L-methionine (SAM). It allows to synthesize pimeloyl-ACP via the fatty acid synthetic pathway. The protein is Malonyl-[acyl-carrier protein] O-methyltransferase of Gallionella capsiferriformans (strain ES-2) (Gallionella ferruginea capsiferriformans (strain ES-2)).